Consider the following 118-residue polypeptide: Small ribosomal subunit protein uS13 (118 aa).

The interval 93-118 is disordered; the sequence is KKLPVRGQRTKTNARTRKGPRKLMKK.

Belongs to the universal ribosomal protein uS13 family. Part of the 30S ribosomal subunit. Forms a loose heterodimer with protein S19. Forms two bridges to the 50S subunit in the 70S ribosome.

Functionally, located at the top of the head of the 30S subunit, it contacts several helices of the 16S rRNA. In the 70S ribosome it contacts the 23S rRNA (bridge B1a) and protein L5 of the 50S subunit (bridge B1b), connecting the 2 subunits; these bridges are implicated in subunit movement. Contacts the tRNAs in the A and P-sites. This chain is Small ribosomal subunit protein uS13, found in Buchnera aphidicola subsp. Baizongia pistaciae (strain Bp).